A 248-amino-acid polypeptide reads, in one-letter code: Pulmonary surfactant-associated protein A (248 aa).

Positions 1 to 20 (MWLCPLALTLTLMAASGAAC) are cleaved as a signal peptide. Residues 31–100 (GIPGTPGSHG…PGERGPPGLP (70 aa)) enclose the Collagen-like domain. Residues 33–100 (PGTPGSHGLP…PGERGPPGLP (68 aa)) form a disordered region. The span at 42 to 51 (PGRDGRDGVK) shows a compositional bias: basic and acidic residues. The segment covering 54 to 65 (PGPPGPMGPPGD) has biased composition (pro residues). One can recognise a C-type lectin domain in the interval 134–247 (IGGKVFSTNG…CLYNRLTICE (114 aa)). Intrachain disulfides connect cysteine 155/cysteine 246 and cysteine 224/cysteine 238. The N-linked (GlcNAc...) asparagine glycan is linked to asparagine 207. Ca(2+) is bound by residues glutamate 215, alanine 217, asparagine 234, and aspartate 235.

It belongs to the SFTPA family. As to quaternary structure, oligomeric complex of 6 set of homotrimers.

The protein resides in the secreted. Its subcellular location is the extracellular space. It is found in the extracellular matrix. It localises to the surface film. In presence of calcium ions, it binds to surfactant phospholipids and contributes to lower the surface tension at the air-liquid interface in the alveoli of the mammalian lung and is essential for normal respiration. Enhances the expression of MYO18A/SP-R210 on alveolar macrophages. The protein is Pulmonary surfactant-associated protein A (SFTPA1) of Macaca mulatta (Rhesus macaque).